Reading from the N-terminus, the 157-residue chain is Small ribosomal subunit protein uS7 (157 aa).

Belongs to the universal ribosomal protein uS7 family. Part of the 30S ribosomal subunit. Contacts proteins S9 and S11.

Functionally, one of the primary rRNA binding proteins, it binds directly to 16S rRNA where it nucleates assembly of the head domain of the 30S subunit. Is located at the subunit interface close to the decoding center, probably blocks exit of the E-site tRNA. In Rhodopirellula baltica (strain DSM 10527 / NCIMB 13988 / SH1), this protein is Small ribosomal subunit protein uS7.